The following is a 206-amino-acid chain: Crossover junction endodeoxyribonuclease RuvC (206 aa).

Catalysis depends on residues aspartate 7, glutamate 67, and aspartate 138. Mg(2+)-binding residues include aspartate 7, glutamate 67, and aspartate 138.

Belongs to the RuvC family. As to quaternary structure, homodimer which binds Holliday junction (HJ) DNA. The HJ becomes 2-fold symmetrical on binding to RuvC with unstacked arms; it has a different conformation from HJ DNA in complex with RuvA. In the full resolvosome a probable DNA-RuvA(4)-RuvB(12)-RuvC(2) complex forms which resolves the HJ. The cofactor is Mg(2+).

The protein resides in the cytoplasm. The enzyme catalyses Endonucleolytic cleavage at a junction such as a reciprocal single-stranded crossover between two homologous DNA duplexes (Holliday junction).. The RuvA-RuvB-RuvC complex processes Holliday junction (HJ) DNA during genetic recombination and DNA repair. Endonuclease that resolves HJ intermediates. Cleaves cruciform DNA by making single-stranded nicks across the HJ at symmetrical positions within the homologous arms, yielding a 5'-phosphate and a 3'-hydroxyl group; requires a central core of homology in the junction. The consensus cleavage sequence is 5'-(A/T)TT(C/G)-3'. Cleavage occurs on the 3'-side of the TT dinucleotide at the point of strand exchange. HJ branch migration catalyzed by RuvA-RuvB allows RuvC to scan DNA until it finds its consensus sequence, where it cleaves and resolves the cruciform DNA. In Anaeromyxobacter sp. (strain Fw109-5), this protein is Crossover junction endodeoxyribonuclease RuvC.